Here is a 512-residue protein sequence, read N- to C-terminus: Flavonoid 3'-monooxygenase (512 aa).

A helical membrane pass occupies residues 1–21; that stretch reads MEILSLILYTVIFSFLLQFIL. The Cytoplasmic segment spans residues 22-512; that stretch reads RSFFRKRYPL…PRLEAQAYIG (491 aa). Residue Cys447 coordinates heme.

This sequence belongs to the cytochrome P450 family. Heme is required as a cofactor. As to expression, high expression in petals and ovaries and to a lower extent in sepals, pedicels, anthers and stems. Not detected in leaves, style or roots.

It is found in the endoplasmic reticulum membrane. It carries out the reaction a 3'-unsubstituted flavone + reduced [NADPH--hemoprotein reductase] + O2 = a 3'-hydroxyflavone + oxidized [NADPH--hemoprotein reductase] + H2O + H(+). It participates in secondary metabolite biosynthesis; flavonoid biosynthesis. In terms of biological role, catalyzes the 3'-hydroxylation of the flavonoid B-ring to the 3',4'-hydroxylated state. Convert naringenin to eriodictyol and dihydrokaempferol to dihydroquercetin. The sequence is that of Flavonoid 3'-monooxygenase (CYP75B2) from Petunia hybrida (Petunia).